The following is a 172-amino-acid chain: Small ribosomal subunit protein uS5 (172 aa).

The 64-residue stretch at 17–80 (MREKMIAVNR…EECRRNLVKV (64 aa)) folds into the S5 DRBM domain.

Belongs to the universal ribosomal protein uS5 family. As to quaternary structure, part of the 30S ribosomal subunit. Contacts proteins S4 and S8.

In terms of biological role, with S4 and S12 plays an important role in translational accuracy. Located at the back of the 30S subunit body where it stabilizes the conformation of the head with respect to the body. This Paracidovorax citrulli (strain AAC00-1) (Acidovorax citrulli) protein is Small ribosomal subunit protein uS5.